A 791-amino-acid polypeptide reads, in one-letter code: RAS guanyl-releasing protein 1 (791 aa).

The N-terminal Ras-GEF domain maps to 49-172 (LGKLSKGASL…RLIDTAQINS (124 aa)). A ras exchanger motif region; required for transforming activity region spans residues 53–106 (SKGASLDELIQMCIQAFDLDGNMGQNNELLQIMLTMHGFLIPSTELLIKLRTLY). One can recognise a Ras-GEF domain in the interval 201-432 (EPQELAEHLT…YELSYAREPR (232 aa)). EF-hand domains are found at residues 466–501 (HVQR…FPFS) and 502–528 (FCVM…ASSI). 9 residues coordinate Ca(2+): aspartate 479, aspartate 481, aspartate 483, tyrosine 485, glutamate 490, aspartate 506, aspartate 508, glutamate 510, and glutamate 517. A Phorbol-ester/DAG-type zinc finger spans residues 537-587 (LHNFQETTYLRPTFCDNCAGFLWGVIKQGYRCKDCGMNCHKQCKELVVFEC). A disordered region spans residues 671 to 715 (TQTENETQSLCLQVPSPPRSRTPDLTSHLPISPMPSPCPSPVPTR). The segment covering 672-681 (QTENETQSLC) has biased composition (polar residues). The span at 702–712 (SPMPSPCPSPV) shows a compositional bias: pro residues. Positions 728–783 (IRKARAELRGGKAGIQELEKEKVFLKEENTALKIQLKDAHRRVETLRAELRKYVLD) form a coiled coil.

The protein belongs to the RASGRP family.

It is found in the cytoplasm. The protein resides in the cytosol. It localises to the cell membrane. The protein localises to the golgi apparatus membrane. Its subcellular location is the endoplasmic reticulum membrane. Its activity is regulated as follows. Regulated by F-actin polymerization and probably by calcium. In terms of biological role, functions as a diacylglycerol (DAG)-regulated nucleotide exchange factor specifically activating Ras through the exchange of bound GDP for GTP. This Xenopus laevis (African clawed frog) protein is RAS guanyl-releasing protein 1 (rasgrp1).